The following is a 444-amino-acid chain: MKNIEKSEIIISLVDVDKEFGDKKVLDQINLDIKRGDFVTLLGPSGSGKTTILRLIGGFEWTTRGEIKFNGIDIKDVPAHKRDTATIFQDYALFPHLSVRGNIEFGLKLKRIKKKAEEIPDVVWKKFEHLKKKWQDKQKRKIKELKILQAHLEKLLENPQLDIKKRKKLQDKLDDSDFRYSNWENYLTSKSESFKKKYLTRKITKQEINKEITDIIDLVGLTGNENRAISELSGGMKQRVALARSLVIEPEIVLLDEPLSALDTKIRQKMQVFLKKIQQKLGLTFIFVTHDQDEALQLSDKIAIIRNGKIAQYDEPKQIYDYPVNKWVANFIGDSNFFQAKYIKKNQVEILGLKLYTIHDEFIPGQKLDCLIRPEDIDIDLNSGYFKGKVIQNIYKGSYYSLDIKVENTIINVETNDFYDLETQVFLKWDDDAIHLMEMENAEI.

The ABC transporter domain occupies 11-332; it reads ISLVDVDKEF…PVNKWVANFI (322 aa). An ATP-binding site is contributed by 43 to 50; that stretch reads GPSGSGKT. The interval 111 to 201 is insert; it reads RIKKKAEEIP…ESFKKKYLTR (91 aa).

This sequence belongs to the ABC transporter superfamily. Spermidine/putrescine importer (TC 3.A.1.11.1) family. As to quaternary structure, the complex is composed of two ATP-binding proteins (PotA), two transmembrane proteins (PotB and PotC) and a solute-binding protein (PotD).

Its subcellular location is the cell membrane. It catalyses the reaction ATP + H2O + polyamine-[polyamine-binding protein]Side 1 = ADP + phosphate + polyamineSide 2 + [polyamine-binding protein]Side 1.. Its function is as follows. Part of the ABC transporter complex PotABCD involved in spermidine/putrescine import. Responsible for energy coupling to the transport system. In Mesomycoplasma hyopneumoniae (strain J / ATCC 25934 / NCTC 10110) (Mycoplasma hyopneumoniae), this protein is Spermidine/putrescine import ATP-binding protein PotA.